A 574-amino-acid polypeptide reads, in one-letter code: Choline transporter-like protein ctl1 (574 aa).

N-linked (GlcNAc...) asparagine glycosylation is found at N40 and N101. 8 consecutive transmembrane segments (helical) span residues 144–164, 189–209, 211–231, 246–266, 291–311, 336–356, 396–416, and 434–456; these read WGLT…LMVW, KDAI…VAIP, FLYF…VYLL, LMLL…YYVW, QITL…FIWV, WVLA…FHAL, YGLC…LHFL, and TSAS…VPYM. N457 carries an N-linked (GlcNAc...) asparagine glycan. The next 2 helical transmembrane spans lie at 485-505 and 511-531; these read LLAA…NYSI and FYGY…IGAI. An N-linked (GlcNAc...) asparagine glycan is attached at N558.

This sequence belongs to the CTL (choline transporter-like) family. As to quaternary structure, interacts with atg9.

The protein resides in the endoplasmic reticulum membrane. The protein localises to the preautophagosomal structure membrane. Functionally, required for the normal organization of the preautophagosomal structure (PAS) and for the correct subcellular location of atg9. This is Choline transporter-like protein ctl1 (ctl1) from Schizosaccharomyces pombe (strain 972 / ATCC 24843) (Fission yeast).